The primary structure comprises 184 residues: MNGLILFCAVVFATAVCTYGSDAPCLRAGGRCQHDSITCSGRYRTGLCSGGVRRRCCVPSSSNSGSFSTGMVSQQCLRCICNVESGCRPIGCHWDVNSDSCGYFQIKRAYWIDCGSPGGDWQTCANNLACSSRCVQAYMARYHRRSGCSNSCESFARIHNGGPRGCRNSNTEGYWRRVQAQGCN.

The N-terminal stretch at 1–20 (MNGLILFCAVVFATAVCTYG) is a signal peptide. The region spanning 69-184 (TGMVSQQCLR…WRRVQAQGCN (116 aa)) is the I-type lysozyme domain. 6 disulfide bridges follow: Cys-76–Cys-152, Cys-81–Cys-87, Cys-92–Cys-101, Cys-114–Cys-134, Cys-124–Cys-130, and Cys-148–Cys-166. Glu-84 functions as the Proton donor in the catalytic mechanism. The active-site Nucleophile is Asp-95. 107 to 113 (KRAYWID) is a binding site for substrate. Residues Tyr-138 and 159-161 (HNG) contribute to the substrate site.

Hemolymph, labial palps, non-vesiculated cells of mantle connective tissue, cells of interlamellar junctions and epithelia surrounding the water tubes of the gills.

It localises to the secreted. The enzyme catalyses Hydrolysis of (1-&gt;4)-beta-linkages between N-acetylmuramic acid and N-acetyl-D-glucosamine residues in a peptidoglycan and between N-acetyl-D-glucosamine residues in chitodextrins.. In terms of biological role, has antibacterial activity against the Gram-positive bacteria L.garvieae, M.luteus and Enterococcus sp., and the Gram-negative bacteria E.coli and V.vulnificus. Weak antibacterial activity against the Gram-negative bacterium A.hydrophila. No antibacterial activity detected against the Gram-positive bacterium S.iniae or against the Gram-negative bacterium E.ictaluri. Shows some chitinase activity but no isopeptidase activity. This is Lysozyme 1 from Crassostrea virginica (Eastern oyster).